Here is a 505-residue protein sequence, read N- to C-terminus: Sodium-coupled neutral amino acid transporter 3 (505 aa).

Residues 27-48 (VPTTDTQRTEDTQHCGEGKGFL) are disordered. Over residues 33 to 43 (QRTEDTQHCGE) the composition is skewed to basic and acidic residues. N73 is a glycosylation site (N-linked (GlcNAc...) asparagine). A run of 5 helical transmembrane segments spans residues 82–102 (GILGLAYAMANTGIILFLFLL), 105–125 (VALLSSYSIHLLLKSSGIVGI), 143–163 (AAALAITLQNIGAMSSYLYII), 186–206 (MDGNYLVILVSVTIILPLALM), and 212–232 (LGYSSGFSLSCMVFFLIAVIY). Cysteines 239 and 276 form a disulfide. N247 and N251 each carry an N-linked (GlcNAc...) asparagine glycan. Residues 288–308 (AYTIPIMAFAFVCHPEVLPIY) form a helical membrane-spanning segment. N324 carries an N-linked (GlcNAc...) asparagine glycan. A run of 5 helical transmembrane segments spans residues 325–345 (LSIAVMYVMYFLAALFGYLTF), 367–387 (ILCVRVAVLIAVTLTVPIVLF), 409–429 (VLIATGLLTCINLLVIFAPNI), 432–452 (IFGIIGATSAPCLIFIFPAIF), and 472–492 (ALCFAAVGFLLMTMSLSFIII).

It belongs to the amino acid/polyamine transporter 2 family. As to expression, expressed predominantly in liver, moderately expressed in kidney and brain, and barely detectable in heart and muscle. Within liver, expressed in hepatocytes. Not detected in testis. Expressed in cells of the ganglion cell layer, in soma of some cells of the inner nuclear layer (at protein level). Expressed in the inner segments of photoreceptor cells.

Its subcellular location is the cell membrane. It is found in the basolateral cell membrane. The catalysed reaction is L-histidine(out) + Na(+)(out) + H(+)(in) = L-histidine(in) + Na(+)(in) + H(+)(out). It catalyses the reaction L-glutamine(out) + Na(+)(out) + H(+)(in) = L-glutamine(in) + Na(+)(in) + H(+)(out). It carries out the reaction L-asparagine(out) + Na(+)(out) + H(+)(in) = L-asparagine(in) + Na(+)(in) + H(+)(out). In terms of biological role, symporter that cotransports specific neutral amino acids and sodium ions, coupled to an H(+) antiporter activity. Mainly participates in the glutamate-GABA-glutamine cycle in brain where it transports L-glutamine from astrocytes in the intercellular space for the replenishment of both neurotransmitters glutamate and gamma-aminobutyric acid (GABA) in neurons and also functions as the major influx transporter in ganglion cells mediating the uptake of glutamine. The transport activity is specific for L-glutamine, L-histidine and L-asparagine. The transport is electroneutral coupled to the cotransport of 1 Na(+) and the antiport of 1 H(+). The transport is pH dependent, saturable, Li(+) tolerant and functions in both direction depending on the concentration gradients of its substrates and cotransported ions. Also mediates an amino acid-gated H(+) conductance that is not stoichiometrically coupled to the amino acid transport but which influences the ionic gradients that drive the amino acid transport. In addition, may play a role in nitrogen metabolism, amino acid homeostasis, glucose metabolism and renal ammoniagenesis. The chain is Sodium-coupled neutral amino acid transporter 3 from Mus musculus (Mouse).